A 229-amino-acid polypeptide reads, in one-letter code: Ribulose-phosphate 3-epimerase (229 aa).

S12 lines the substrate pocket. H37, D39, and H70 together coordinate a divalent metal cation. Catalysis depends on D39, which acts as the Proton acceptor. Substrate is bound by residues H70, 146–149 (GFTG), 181–183 (DGG), and 203–204 (AS). A divalent metal cation is bound at residue D181. D181 serves as the catalytic Proton donor.

It belongs to the ribulose-phosphate 3-epimerase family. It depends on a divalent metal cation as a cofactor.

The catalysed reaction is D-ribulose 5-phosphate = D-xylulose 5-phosphate. Its pathway is carbohydrate degradation. Its function is as follows. Catalyzes the reversible epimerization of D-ribulose 5-phosphate to D-xylulose 5-phosphate. This chain is Ribulose-phosphate 3-epimerase, found in Chlamydia pneumoniae (Chlamydophila pneumoniae).